A 263-amino-acid polypeptide reads, in one-letter code: Transmembrane protein 176B (263 aa).

The next 4 membrane-spanning stretches (helical) occupy residues 61-81, 89-109, 121-141, and 197-217; these read LGVT…CLYF, AFGC…GTIV, VSCL…VLGV, and LFLA…VVSV. Serine 231, serine 240, and serine 253 each carry phosphoserine. Positions 239–263 are disordered; it reads ESERKLLDGHPAPASPAKEKIPAIL.

The protein belongs to the TMEM176 family. In terms of tissue distribution, ubiquitously expressed with higher expression in lung, liver, kidney and colon. Expressed in cerebellar granule cells.

It is found in the nucleus membrane. May play a role in the process of maturation of dendritic cells. Required for the development of cerebellar granule cells. The sequence is that of Transmembrane protein 176B (Tmem176b) from Mus musculus (Mouse).